The sequence spans 456 residues: Glycerol-3-phosphate acyltransferase 4 (456 aa).

The first 37 residues, 1-37 (MFLLLPFDSLIVNLLGISLTVLFTLLLVFIIVPAIFG), serve as a signal peptide directing secretion. The next 2 helical transmembrane spans lie at 156–176 (ISLRLTILWGLGVLIRYCFLL) and 180–200 (IALAFTGIGLLVVGTTMVGYL). The N-linked (GlcNAc...) asparagine glycan is linked to asparagine 247. Positions 248-253 (HTSPID) match the HXXXXD motif motif. N-linked (GlcNAc...) asparagine glycans are attached at residues asparagine 327, asparagine 328, and asparagine 362.

It belongs to the 1-acyl-sn-glycerol-3-phosphate acyltransferase family. In terms of tissue distribution, highly expressed in testis.

It localises to the endoplasmic reticulum membrane. It carries out the reaction sn-glycerol 3-phosphate + an acyl-CoA = a 1-acyl-sn-glycero-3-phosphate + CoA. The catalysed reaction is dodecanoyl-CoA + sn-glycerol 3-phosphate = 1-dodecanoyl-sn-glycerol 3-phosphate + CoA. It catalyses the reaction sn-glycerol 3-phosphate + hexadecanoyl-CoA = 1-hexadecanoyl-sn-glycero-3-phosphate + CoA. The enzyme catalyses sn-glycerol 3-phosphate + octadecanoyl-CoA = 1-octadecanoyl-sn-glycero-3-phosphate + CoA. It carries out the reaction sn-glycerol 3-phosphate + (9Z)-octadecenoyl-CoA = 1-(9Z-octadecenoyl)-sn-glycero-3-phosphate + CoA. The catalysed reaction is (9Z,12Z)-octadecadienoyl-CoA + sn-glycerol 3-phosphate = 1-(9Z,12Z)-octadecadienoyl-sn-glycero-3-phosphate + CoA. It functions in the pathway phospholipid metabolism; CDP-diacylglycerol biosynthesis; CDP-diacylglycerol from sn-glycerol 3-phosphate: step 1/3. Its function is as follows. Converts glycerol-3-phosphate to 1-acyl-sn-glycerol-3-phosphate (lysophosphatidic acid or LPA) by incorporating an acyl moiety at the sn-1 position of the glycerol backbone. Active against both saturated and unsaturated long-chain fatty acyl-CoAs. Protects cells against lipotoxicity. In Mus musculus (Mouse), this protein is Glycerol-3-phosphate acyltransferase 4.